The chain runs to 90 residues: Large ribosomal subunit protein bL27 (90 aa).

Positions 1 to 21 (MAHKKAGGSSRNGRDSQAKRL) are disordered.

It belongs to the bacterial ribosomal protein bL27 family.

The chain is Large ribosomal subunit protein bL27 from Laribacter hongkongensis (strain HLHK9).